A 154-amino-acid polypeptide reads, in one-letter code: Insulin-like growth factor 1 (154 aa).

The b stretch occupies residues 50-78 (GPETLCGAELVDALQFVCGDRGFYFNKPT). Cystine bridges form between Cys55–Cys97, Cys67–Cys110, and Cys96–Cys101. Residues 79–90 (GYGSSSRRAPQT) form a c region. The a stretch occupies residues 91-111 (GIVDECCFRSCDLRRLEMYCA). The tract at residues 112-119 (PLKPAKSA) is d. Positions 120-154 (RSVRAQRHTDMPKAQKEVHLKNTSRGSAGNKNYRM) are cleaved as a propeptide — e peptide. Residues 121–154 (SVRAQRHTDMPKAQKEVHLKNTSRGSAGNKNYRM) are disordered. A compositionally biased stretch (basic and acidic residues) spans 126–139 (RHTDMPKAQKEVHL). A compositionally biased stretch (polar residues) spans 140-154 (KNTSRGSAGNKNYRM).

It belongs to the insulin family. Forms a ternary complex with IGFR1 and ITGAV:ITGB3. Forms a ternary complex with IGFR1 and ITGA6:ITGB4. Forms a ternary complex with IGFBP3 and ALS.

It is found in the secreted. In terms of biological role, the insulin-like growth factors, isolated from plasma, are structurally and functionally related to insulin but have a much higher growth-promoting activity. May be a physiological regulator of [1-14C]-2-deoxy-D-glucose (2DG) transport and glycogen synthesis in osteoblasts. Stimulates glucose transport in bone-derived osteoblastic (PyMS) cells and is effective at much lower concentrations than insulin, not only regarding glycogen and DNA synthesis but also with regard to enhancing glucose uptake. May play a role in synapse maturation. Ca(2+)-dependent exocytosis of IGF1 is required for sensory perception of smell in the olfactory bulb. Acts as a ligand for IGF1R. Binds to the alpha subunit of IGF1R, leading to the activation of the intrinsic tyrosine kinase activity which autophosphorylates tyrosine residues in the beta subunit thus initiating a cascade of down-stream signaling events leading to activation of the PI3K-AKT/PKB and the Ras-MAPK pathways. Binds to integrins ITGAV:ITGB3 and ITGA6:ITGB4. Its binding to integrins and subsequent ternary complex formation with integrins and IGFR1 are essential for IGF1 signaling. Induces the phosphorylation and activation of IGFR1, MAPK3/ERK1, MAPK1/ERK2 and AKT1. As part of the MAPK/ERK signaling pathway, acts as a negative regulator of apoptosis in cardiomyocytes via promotion of STUB1/CHIP-mediated ubiquitination and degradation of ICER-type isoforms of CREM. This chain is Insulin-like growth factor 1, found in Bos taurus (Bovine).